We begin with the raw amino-acid sequence, 462 residues long: Argininosuccinate lyase (462 aa).

Belongs to the lyase 1 family. Argininosuccinate lyase subfamily.

The protein localises to the cytoplasm. The catalysed reaction is 2-(N(omega)-L-arginino)succinate = fumarate + L-arginine. Its pathway is amino-acid biosynthesis; L-arginine biosynthesis; L-arginine from L-ornithine and carbamoyl phosphate: step 3/3. This chain is Argininosuccinate lyase, found in Bacillus cereus (strain ATCC 10987 / NRS 248).